The chain runs to 349 residues: Palmitoyltransferase PFA5 (349 aa).

Helical transmembrane passes span 19-39 and 57-77; these read LIPF…CHQF and LIIV…LMLV. A DHHC domain is found at 126 to 176; that stretch reads IWCSNCQSLKMSRTHHSTKVGYCVPRFDHYCVWIGTVLGRLNYKLFVQFTF. Cys-156 (S-palmitoyl cysteine intermediate) is an active-site residue. The next 2 membrane-spanning stretches (helical) occupy residues 170 to 190 and 204 to 224; these read LFVQ…ISIA and VYAV…LFLT.

It belongs to the DHHC palmitoyltransferase family. PFA5 subfamily.

It localises to the membrane. It catalyses the reaction L-cysteinyl-[protein] + hexadecanoyl-CoA = S-hexadecanoyl-L-cysteinyl-[protein] + CoA. In Kluyveromyces lactis (strain ATCC 8585 / CBS 2359 / DSM 70799 / NBRC 1267 / NRRL Y-1140 / WM37) (Yeast), this protein is Palmitoyltransferase PFA5 (PFA5).